The chain runs to 250 residues: Deoxynucleoside kinase (250 aa).

Position 27–35 (27–35) interacts with ATP; it reads GNIGSGKTT. 3 residues coordinate substrate: Glu-52, Tyr-70, and Gln-81. Glu-104 functions as the Proton acceptor in the catalytic mechanism. Residues Arg-105 and Glu-172 each coordinate substrate. Phosphoserine occurs at positions 236, 241, and 243.

Belongs to the DCK/DGK family. Monomer.

It carries out the reaction a 2'-deoxyribonucleoside + ATP = a 2'-deoxyribonucleoside 5'-phosphate + ADP + H(+). Its activity is regulated as follows. Subject to feedback inhibition by dTTP. Its function is as follows. Deoxyribonucleoside kinase that has a broad specificity phosphorylating thymidine, 2'-deoxyriboadenosine, 2'-deoxyribocytidine and 2'-deoxyriboguanosine. Specificity is higher for pyrimidine nucleosides. Several anti-viral and anti-cancer nucleoside analogs are also efficiently phosphorylated. This Drosophila melanogaster (Fruit fly) protein is Deoxynucleoside kinase (dnk).